The sequence spans 652 residues: Acetyl-coenzyme A synthetase (652 aa).

Residues 191-194, T311, and N335 contribute to the CoA site; that span reads RAGR. ATP-binding positions include 387–389, 411–416, D500, and R515; these read GEP and DTWWQT. Residue S523 participates in CoA binding. R526 serves as a coordination point for ATP. Mg(2+) is bound by residues V537, H539, and I542. R584 lines the CoA pocket. Residue K609 is modified to N6-acetyllysine.

This sequence belongs to the ATP-dependent AMP-binding enzyme family. Requires Mg(2+) as cofactor. Acetylated. Deacetylation by the SIR2-homolog deacetylase activates the enzyme.

It catalyses the reaction acetate + ATP + CoA = acetyl-CoA + AMP + diphosphate. Functionally, catalyzes the conversion of acetate into acetyl-CoA (AcCoA), an essential intermediate at the junction of anabolic and catabolic pathways. Acs undergoes a two-step reaction. In the first half reaction, Acs combines acetate with ATP to form acetyl-adenylate (AcAMP) intermediate. In the second half reaction, it can then transfer the acetyl group from AcAMP to the sulfhydryl group of CoA, forming the product AcCoA. Its function is as follows. Enables the cell to use acetate during aerobic growth to generate energy via the TCA cycle, and biosynthetic compounds via the glyoxylate shunt. Acetylates CheY, the response regulator involved in flagellar movement and chemotaxis. The sequence is that of Acetyl-coenzyme A synthetase from Serratia proteamaculans (strain 568).